The sequence spans 156 residues: ATP synthase subunit b (156 aa).

The chain crosses the membrane as a helical span at residues 7 to 27; it reads IFFQMLVFFVLGWFTMKFVWP.

Belongs to the ATPase B chain family. F-type ATPases have 2 components, F(1) - the catalytic core - and F(0) - the membrane proton channel. F(1) has five subunits: alpha(3), beta(3), gamma(1), delta(1), epsilon(1). F(0) has three main subunits: a(1), b(2) and c(10-14). The alpha and beta chains form an alternating ring which encloses part of the gamma chain. F(1) is attached to F(0) by a central stalk formed by the gamma and epsilon chains, while a peripheral stalk is formed by the delta and b chains.

The protein resides in the cell inner membrane. F(1)F(0) ATP synthase produces ATP from ADP in the presence of a proton or sodium gradient. F-type ATPases consist of two structural domains, F(1) containing the extramembraneous catalytic core and F(0) containing the membrane proton channel, linked together by a central stalk and a peripheral stalk. During catalysis, ATP synthesis in the catalytic domain of F(1) is coupled via a rotary mechanism of the central stalk subunits to proton translocation. Functionally, component of the F(0) channel, it forms part of the peripheral stalk, linking F(1) to F(0). The polypeptide is ATP synthase subunit b (Bordetella bronchiseptica (strain ATCC BAA-588 / NCTC 13252 / RB50) (Alcaligenes bronchisepticus)).